The primary structure comprises 518 residues: Cytochrome P450 736A117 (518 aa).

Residue Asn12 is glycosylated (N-linked (GlcNAc...) asparagine). The chain crosses the membrane as a helical span at residues 17–37; the sequence is FLQPLAFTLLAIFLVLLYTWY. Asn185, Asn275, and Asn356 each carry an N-linked (GlcNAc...) asparagine glycan. Residue Cys460 coordinates heme.

This sequence belongs to the cytochrome P450 family. Heme is required as a cofactor. Expressed at similar levels in fruit kernel, seedlings, leaves, stems and buds.

The protein resides in the membrane. This Prunus mume (Japanese apricot) protein is Cytochrome P450 736A117.